A 391-amino-acid polypeptide reads, in one-letter code: Na(+)/H(+) antiporter NhaA (391 aa).

11 helical membrane-spanning segments follow: residues 14–34 (AGGI…NSPL), 59–79 (LLLW…GLEV), 95–115 (SLPT…YLFF), 124–144 (VGWA…MALL), 154–174 (VFLL…IALF), 177–197 (TDLS…LVAL), 213–233 (IILW…GVVI), 261–281 (FLIL…NVGF), 287–307 (PVPV…VLLF), 328–348 (IAPV…IASL), and 363–383 (IGIL…LSKV).

Belongs to the NhaA Na(+)/H(+) (TC 2.A.33) antiporter family.

The protein resides in the cell inner membrane. The catalysed reaction is Na(+)(in) + 2 H(+)(out) = Na(+)(out) + 2 H(+)(in). Na(+)/H(+) antiporter that extrudes sodium in exchange for external protons. The protein is Na(+)/H(+) antiporter NhaA of Shewanella amazonensis (strain ATCC BAA-1098 / SB2B).